We begin with the raw amino-acid sequence, 253 residues long: Tryptophan synthase alpha chain (253 aa).

Catalysis depends on proton acceptor residues E47 and D58.

It belongs to the TrpA family. Tetramer of two alpha and two beta chains.

It catalyses the reaction (1S,2R)-1-C-(indol-3-yl)glycerol 3-phosphate + L-serine = D-glyceraldehyde 3-phosphate + L-tryptophan + H2O. Its pathway is amino-acid biosynthesis; L-tryptophan biosynthesis; L-tryptophan from chorismate: step 5/5. Functionally, the alpha subunit is responsible for the aldol cleavage of indoleglycerol phosphate to indole and glyceraldehyde 3-phosphate. This chain is Tryptophan synthase alpha chain, found in Lactococcus lactis subsp. cremoris (strain MG1363).